A 497-amino-acid polypeptide reads, in one-letter code: GTPase-activating protein GYP8 (497 aa).

A Rab-GAP TBC domain is found at 69–281; sequence FVNNSLRKDC…QIFDMTISMQ (213 aa).

The protein is GTPase-activating protein GYP8 (GYP8) of Saccharomyces cerevisiae (strain ATCC 204508 / S288c) (Baker's yeast).